The chain runs to 67 residues: Disintegrin EC3A (67 aa).

Residues 1–65 form the Disintegrin domain; it reads NSVHPCCDPV…DCPRNRYKGK (65 aa). Intrachain disulfides connect Cys-6-Cys-29, Cys-20-Cys-26, Cys-25-Cys-50, and Cys-38-Cys-57. The Cell attachment site; atypical (VGD) signature appears at 42–44; it reads VGD.

The protein belongs to the venom metalloproteinase (M12B) family. P-II subfamily. P-IIe sub-subfamily. As to quaternary structure, heterodimer with EC3B; disulfide-linked. As to expression, expressed by the venom gland.

It localises to the secreted. Its function is as follows. Inhibits adhesion of cells expressing alpha-4/beta-1 (ITGA4/ITGB1) and alpha-4/beta-7 (ITGA4/ITGB7) integrins to the natural ligands vascular cell adhesion molecule 1 (VCAM-1) and mucosal addressin cell adhesion molecule 1 (MADCAM-1). It is also a weaker inhibitor of alpha-5/beta-1 (ITGA5/ITGB1) and alpha-2b/beta-3 (ITGA2B/ITGB3) integrins. The inhibitory activity of EC3 towards alpha-4 integrins is associated with the MLD sequence of EC3B subunit. The ability of EC3 to inhibit ITGA5/ITGB1 resides in both subunits A and B. In Echis carinatus (Saw-scaled viper), this protein is Disintegrin EC3A.